A 457-amino-acid polypeptide reads, in one-letter code: Protein N-terminal amidase (457 aa).

Positions 19 to 453 (LKVLVIQLNP…EGAILREVQF (435 aa)) constitute a CN hydrolase domain. Glutamate 63 (proton acceptor) is an active-site residue. Residue lysine 136 is the Proton donor of the active site. Cysteine 187 serves as the catalytic Nucleophile.

The protein belongs to the carbon-nitrogen hydrolase superfamily.

In terms of biological role, deamidates N-terminal Asn and Gln. Component of a targeting complex in the N-end rule pathway. The protein is Protein N-terminal amidase (NTA1) of Saccharomyces cerevisiae (strain ATCC 204508 / S288c) (Baker's yeast).